Reading from the N-terminus, the 528-residue chain is Membrane protein insertase YidC (528 aa).

4 helical membrane-spanning segments follow: residues 5 to 25 (VVIAVILSIAVLYAYSMIFPP), 346 to 366 (YGIAIIIITVILKLLFFPLTH), 416 to 436 (LPMIVQIPVFFALYKALMFSI), and 486 to 506 (MLALPVVFTFMFLNFPSGLVL).

This sequence belongs to the OXA1/ALB3/YidC family. Type 1 subfamily. Interacts with the Sec translocase complex via SecD. Specifically interacts with transmembrane segments of nascent integral membrane proteins during membrane integration.

The protein resides in the cell inner membrane. Required for the insertion and/or proper folding and/or complex formation of integral membrane proteins into the membrane. Involved in integration of membrane proteins that insert both dependently and independently of the Sec translocase complex, as well as at least some lipoproteins. Aids folding of multispanning membrane proteins. The sequence is that of Membrane protein insertase YidC from Geotalea uraniireducens (strain Rf4) (Geobacter uraniireducens).